We begin with the raw amino-acid sequence, 306 residues long: Low-density lipoprotein receptor class A domain-containing protein 4 (306 aa).

Over 1–64 (MPEAGFQATN…PPGIFNSELE (64 aa)) the chain is Lumenal. An LDL-receptor class A domain is found at 16–48 (KFTCTSGKCLYLGSLVCNQQNDCGDNSDEENCL). 2 cysteine pairs are disulfide-bonded: Cys-19-Cys-38 and Cys-32-Cys-47. Residues 65–85 (FAQIIIIVVVVTVMVVVIVCL) form a helical membrane-spanning segment. The Cytoplasmic portion of the chain corresponds to 86–306 (LNHYKVSTRS…GKDRKPGNLV (221 aa)). The short motif at 180-183 (PPPY) is the PPxY motif 1 element. Residues 208–211 (PPNR) carry the SMAD interaction motif (SIM) motif. The PPxY motif 2 signature appears at 252–255 (PPTY). The tract at residues 286 to 306 (NNAESTIVPIKGKDRKPGNLV) is disordered. Over residues 296-306 (KGKDRKPGNLV) the composition is skewed to basic and acidic residues.

The protein belongs to the PMEPA1 family. In terms of assembly, interacts with PMEPA1. Interacts (via the SMAD interaction motif) with SMAD2 and SMAD3. Expressed in lymphocytes.

The protein localises to the early endosome membrane. Its function is as follows. Functions as a negative regulator of TGF-beta signaling and thereby probably plays a role in cell proliferation, differentiation, apoptosis, motility, extracellular matrix production and immunosuppression. In the canonical TGF-beta pathway, ZFYVE9/SARA recruits the intracellular signal transducer and transcriptional modulators SMAD2 and SMAD3 to the TGF-beta receptor. Phosphorylated by the receptor, SMAD2 and SMAD3 then form a heteromeric complex with SMAD4 that translocates to the nucleus to regulate transcription. Through interaction with SMAD2 and SMAD3, LDLRAD4 may compete with ZFYVE9 and SMAD4 and prevent propagation of the intracellular signal. This chain is Low-density lipoprotein receptor class A domain-containing protein 4 (LDLRAD4), found in Homo sapiens (Human).